A 412-amino-acid polypeptide reads, in one-letter code: Gamma-glutamyl phosphate reductase (412 aa).

It belongs to the gamma-glutamyl phosphate reductase family.

It localises to the cytoplasm. The enzyme catalyses L-glutamate 5-semialdehyde + phosphate + NADP(+) = L-glutamyl 5-phosphate + NADPH + H(+). It functions in the pathway amino-acid biosynthesis; L-proline biosynthesis; L-glutamate 5-semialdehyde from L-glutamate: step 2/2. Catalyzes the NADPH-dependent reduction of L-glutamate 5-phosphate into L-glutamate 5-semialdehyde and phosphate. The product spontaneously undergoes cyclization to form 1-pyrroline-5-carboxylate. This chain is Gamma-glutamyl phosphate reductase, found in Lactiplantibacillus plantarum (strain ATCC BAA-793 / NCIMB 8826 / WCFS1) (Lactobacillus plantarum).